Consider the following 130-residue polypeptide: Albumin-1 F (130 aa).

The first 26 residues, 1-26, serve as a signal peptide directing secretion; that stretch reads MASVKLASLIVLFATLGMFLTKNVGA. 3 disulfides stabilise this stretch: Cys-29/Cys-46, Cys-33/Cys-48, and Cys-41/Cys-58. 2 propeptides span residues 64–69 and 123–130; these read VFLRTN and LLKSVSTA.

In terms of processing, the C-terminal glycine may be removed from PA1b.

Its function is as follows. PA1b binds to basic 7S globulin (BG) and stimulates its phosphorylation activity. Involved in the signal transduction system to regulate the growth and differentiation as a hormone peptide. Toxic to various insects through binding to a high affinity binding site in the insect gut. The chain is Albumin-1 F from Pisum sativum (Garden pea).